Reading from the N-terminus, the 609-residue chain is Carotenoid cleavage dioxygenase 7, chloroplastic (609 aa).

Residues 1-34 constitute a chloroplast transit peptide; it reads MATQAIAPMHAAVVHRHHVLPPRRCVRRRGVFVR. Fe cation contacts are provided by H263, H316, H394, and H603.

It belongs to the carotenoid oxygenase family. The cofactor is Fe(2+). As to expression, expressed in vascular bundles of roots, leaves, stems and panicles.

The protein resides in the plastid. It localises to the chloroplast. The catalysed reaction is 9-cis-beta-carotene + O2 = 9-cis-10'-apo-beta-carotenal + beta-ionone. In terms of biological role, involved in strigolactones biosynthesis by cleaving asymmetrically a variety of linear and cyclic carotenoids at the 9-10 double bond. Produces one C(13) beta-ionone and the C(27) 10'-apo-beta-carotenal. Strigolactones are hormones that inhibit tillering and shoot branching through the MAX-dependent pathway, contribute to the regulation of shoot architectural response to phosphate-limiting conditions and function as rhizosphere signal that stimulates hyphal branching of arbuscular mycorrhizal fungi and trigger seed germination of root parasitic weeds. Can rescue the phenotype in the Arabidopsis max3 mutant. In Oryza sativa subsp. japonica (Rice), this protein is Carotenoid cleavage dioxygenase 7, chloroplastic (CCD7).